The primary structure comprises 320 residues: Ferrochelatase (320 aa).

Residues His-194 and Glu-275 each coordinate Fe cation.

The protein belongs to the ferrochelatase family.

The protein resides in the cytoplasm. It carries out the reaction heme b + 2 H(+) = protoporphyrin IX + Fe(2+). The protein operates within porphyrin-containing compound metabolism; protoheme biosynthesis; protoheme from protoporphyrin-IX: step 1/1. Its function is as follows. Catalyzes the ferrous insertion into protoporphyrin IX. The sequence is that of Ferrochelatase from Serratia proteamaculans (strain 568).